Consider the following 443-residue polypeptide: 3-phosphoshikimate 1-carboxyvinyltransferase (443 aa).

K24, S25, and R29 together coordinate 3-phosphoshikimate. K24 provides a ligand contact to phosphoenolpyruvate. Phosphoenolpyruvate is bound by residues G95 and R123. Residues S167, Q169, D323, and K350 each contribute to the 3-phosphoshikimate site. Q169 is a binding site for phosphoenolpyruvate. The active-site Proton acceptor is the D323. Phosphoenolpyruvate is bound by residues R354 and R398.

Belongs to the EPSP synthase family. Monomer.

The protein resides in the cytoplasm. The enzyme catalyses 3-phosphoshikimate + phosphoenolpyruvate = 5-O-(1-carboxyvinyl)-3-phosphoshikimate + phosphate. It functions in the pathway metabolic intermediate biosynthesis; chorismate biosynthesis; chorismate from D-erythrose 4-phosphate and phosphoenolpyruvate: step 6/7. Functionally, catalyzes the transfer of the enolpyruvyl moiety of phosphoenolpyruvate (PEP) to the 5-hydroxyl of shikimate-3-phosphate (S3P) to produce enolpyruvyl shikimate-3-phosphate and inorganic phosphate. This is 3-phosphoshikimate 1-carboxyvinyltransferase from Caulobacter vibrioides (strain ATCC 19089 / CIP 103742 / CB 15) (Caulobacter crescentus).